The following is a 507-amino-acid chain: Histidine ammonia-lyase (507 aa).

A cross-link (5-imidazolinone (Ala-Gly)) is located at residues 141–143 (ASG). Ser-142 carries the post-translational modification 2,3-didehydroalanine (Ser).

Belongs to the PAL/histidase family. Post-translationally, contains an active site 4-methylidene-imidazol-5-one (MIO), which is formed autocatalytically by cyclization and dehydration of residues Ala-Ser-Gly.

It localises to the cytoplasm. The catalysed reaction is L-histidine = trans-urocanate + NH4(+). The protein operates within amino-acid degradation; L-histidine degradation into L-glutamate; N-formimidoyl-L-glutamate from L-histidine: step 1/3. The polypeptide is Histidine ammonia-lyase (Burkholderia ambifaria (strain MC40-6)).